The following is a 220-amino-acid chain: Protein-L-isoaspartate O-methyltransferase (220 aa).

S69 is an active-site residue.

The protein belongs to the methyltransferase superfamily. L-isoaspartyl/D-aspartyl protein methyltransferase family.

The protein resides in the cytoplasm. The enzyme catalyses [protein]-L-isoaspartate + S-adenosyl-L-methionine = [protein]-L-isoaspartate alpha-methyl ester + S-adenosyl-L-homocysteine. Its function is as follows. Catalyzes the methyl esterification of L-isoaspartyl residues in peptides and proteins that result from spontaneous decomposition of normal L-aspartyl and L-asparaginyl residues. It plays a role in the repair and/or degradation of damaged proteins. The sequence is that of Protein-L-isoaspartate O-methyltransferase from Alcanivorax borkumensis (strain ATCC 700651 / DSM 11573 / NCIMB 13689 / SK2).